Consider the following 97-residue polypeptide: Defensin-like protein 196 (97 aa).

A signal peptide spans 1–28 (MAKMSALSIFAIFIILVLVIFEIPEIEA). Intrachain disulfides connect Cys33–Cys85, Cys46–Cys70, Cys55–Cys80, and Cys59–Cys82.

Belongs to the DEFL family. Protease inhibitor I18 (RTI/MTI-2) subfamily.

It localises to the secreted. This Arabidopsis thaliana (Mouse-ear cress) protein is Defensin-like protein 196 (ATTI4).